The following is a 301-amino-acid chain: D-psicose 3-epimerase (301 aa).

Tyr-16 is a binding site for substrate. Residue Glu-162 is the Proton donor/acceptor of the active site. Residue Glu-162 coordinates Mn(2+). Residues Glu-168 and 195-198 contribute to the substrate site; that span reads DTFH. Mn(2+)-binding residues include Asp-195 and His-221. Arg-227 contacts substrate. Catalysis depends on Glu-256, which acts as the Proton donor/acceptor. Glu-256 is a Mn(2+) binding site.

It belongs to the hyi family. In terms of assembly, homotetramer. The cofactor is Mn(2+). Co(2+) is required as a cofactor.

It catalyses the reaction D-allulose = keto-D-fructose. With respect to regulation, completely inhibited by EDTA and partially inhibited by Zn(2+), Mg(2+) and Cu(2+). Involved in the biosynthesis of D-psicose. Catalyzes the reversible epimerization of D-fructose at the C3 position to yield D-psicose. The enzyme is highly specific for D-psicose and shows very low activity with D-tagatose. In Enterocloster bolteae (strain ATCC BAA-613 / DSM 15670 / CCUG 46953 / JCM 12243 / WAL 16351) (Clostridium bolteae), this protein is D-psicose 3-epimerase.